The primary structure comprises 311 residues: L-lactate dehydrogenase 2 (311 aa).

3 residues coordinate NAD(+): V14, D35, and R40. Position 90 (R90) interacts with substrate. NAD(+) contacts are provided by residues S103, 120–122, and T145; that span reads ATN. Residue 122-125 participates in substrate binding; the sequence is NPCD. A substrate-binding site is contributed by 150–153; that stretch reads DTTR. The Proton acceptor role is filled by H177. Residue T230 coordinates substrate.

The protein belongs to the LDH/MDH superfamily. LDH family. As to quaternary structure, homotetramer.

It localises to the cytoplasm. The catalysed reaction is (S)-lactate + NAD(+) = pyruvate + NADH + H(+). Its pathway is fermentation; pyruvate fermentation to lactate; (S)-lactate from pyruvate: step 1/1. Its function is as follows. Catalyzes the conversion of lactate to pyruvate. The protein is L-lactate dehydrogenase 2 of Listeria monocytogenes serotype 4b (strain F2365).